A 463-amino-acid polypeptide reads, in one-letter code: Argininosuccinate lyase (463 aa).

It belongs to the lyase 1 family. Argininosuccinate lyase subfamily.

The protein localises to the cytoplasm. The catalysed reaction is 2-(N(omega)-L-arginino)succinate = fumarate + L-arginine. It functions in the pathway amino-acid biosynthesis; L-arginine biosynthesis; L-arginine from L-ornithine and carbamoyl phosphate: step 3/3. This Methylorubrum populi (strain ATCC BAA-705 / NCIMB 13946 / BJ001) (Methylobacterium populi) protein is Argininosuccinate lyase.